A 453-amino-acid chain; its full sequence is Bifunctional protein GlmU (453 aa).

A pyrophosphorylase region spans residues 1-226; it reads MVAVAILAAG…YLEITGINDR (226 aa). UDP-N-acetyl-alpha-D-glucosamine is bound by residues 7 to 10, lysine 21, glutamine 73, and 78 to 79; these read LAAG and GT. Aspartate 103 provides a ligand contact to Mg(2+). Residues glycine 140, glutamate 155, asparagine 170, and asparagine 224 each contribute to the UDP-N-acetyl-alpha-D-glucosamine site. Asparagine 224 serves as a coordination point for Mg(2+). Residues 227 to 247 form a linker region; that stretch reads KQLAMANGILQNRVKDHWMAQ. The N-acetyltransferase stretch occupies residues 248–453; sequence GVTLIDPDSI…EWKKTIESKK (206 aa). Arginine 329 and lysine 347 together coordinate UDP-N-acetyl-alpha-D-glucosamine. Residue histidine 359 is the Proton acceptor of the active site. The UDP-N-acetyl-alpha-D-glucosamine site is built by tyrosine 362 and asparagine 373. Acetyl-CoA contacts are provided by residues alanine 376, 382–383, alanine 419, and arginine 436; that span reads NY.

In the N-terminal section; belongs to the N-acetylglucosamine-1-phosphate uridyltransferase family. This sequence in the C-terminal section; belongs to the transferase hexapeptide repeat family. In terms of assembly, homotrimer. It depends on Mg(2+) as a cofactor.

It is found in the cytoplasm. The enzyme catalyses alpha-D-glucosamine 1-phosphate + acetyl-CoA = N-acetyl-alpha-D-glucosamine 1-phosphate + CoA + H(+). It carries out the reaction N-acetyl-alpha-D-glucosamine 1-phosphate + UTP + H(+) = UDP-N-acetyl-alpha-D-glucosamine + diphosphate. The protein operates within nucleotide-sugar biosynthesis; UDP-N-acetyl-alpha-D-glucosamine biosynthesis; N-acetyl-alpha-D-glucosamine 1-phosphate from alpha-D-glucosamine 6-phosphate (route II): step 2/2. It functions in the pathway nucleotide-sugar biosynthesis; UDP-N-acetyl-alpha-D-glucosamine biosynthesis; UDP-N-acetyl-alpha-D-glucosamine from N-acetyl-alpha-D-glucosamine 1-phosphate: step 1/1. Its pathway is bacterial outer membrane biogenesis; LPS lipid A biosynthesis. Functionally, catalyzes the last two sequential reactions in the de novo biosynthetic pathway for UDP-N-acetylglucosamine (UDP-GlcNAc). The C-terminal domain catalyzes the transfer of acetyl group from acetyl coenzyme A to glucosamine-1-phosphate (GlcN-1-P) to produce N-acetylglucosamine-1-phosphate (GlcNAc-1-P), which is converted into UDP-GlcNAc by the transfer of uridine 5-monophosphate (from uridine 5-triphosphate), a reaction catalyzed by the N-terminal domain. The protein is Bifunctional protein GlmU of Rippkaea orientalis (strain PCC 8801 / RF-1) (Cyanothece sp. (strain PCC 8801)).